Consider the following 396-residue polypeptide: Probable sugar efflux transporter (396 aa).

12 helical membrane-spanning segments follow: residues 15 to 35, 50 to 70, 81 to 101, 103 to 123, 136 to 156, 170 to 190, 209 to 229, 246 to 266, 275 to 295, 299 to 319, 333 to 353, and 364 to 384; these read VVTL…PVGL, VGIM…PFML, LICL…SWSF, VLVI…SITA, AQAL…GLPL, FFAI…LLPL, PALM…YTAY, FATA…VIFG, ALVS…LPAA, IHLG…GLGM, VAMA…ALVG, and MIGY…IIIF.

Belongs to the major facilitator superfamily. SotB (TC 2.A.1.2) family.

The protein localises to the cell inner membrane. In terms of biological role, involved in the efflux of sugars. The physiological role may be the reduction of the intracellular concentration of toxic sugars or sugar metabolites. This Shigella flexneri serotype 5b (strain 8401) protein is Probable sugar efflux transporter.